Reading from the N-terminus, the 494-residue chain is UPF0371 protein stu1377 (494 aa).

The protein belongs to the UPF0371 family.

The polypeptide is UPF0371 protein stu1377 (Streptococcus thermophilus (strain ATCC BAA-250 / LMG 18311)).